The following is an 85-amino-acid chain: Large ribosomal subunit protein bL27 (85 aa).

The tract at residues 1-20 (MAHKKAGGSTRNGRDSESKR) is disordered.

It belongs to the bacterial ribosomal protein bL27 family.

The chain is Large ribosomal subunit protein bL27 from Azotobacter vinelandii (strain DJ / ATCC BAA-1303).